The following is a 392-amino-acid chain: Imidazolonepropionase (392 aa).

The Fe(3+) site is built by histidine 69 and histidine 71. Histidine 69 and histidine 71 together coordinate Zn(2+). 4-imidazolone-5-propanoate contacts are provided by arginine 78, tyrosine 136, and histidine 163. Tyrosine 136 provides a ligand contact to N-formimidoyl-L-glutamate. Position 226 (histidine 226) interacts with Fe(3+). Histidine 226 is a binding site for Zn(2+). 4-imidazolone-5-propanoate is bound at residue glutamine 229. Residue aspartate 302 participates in Fe(3+) binding. Residue aspartate 302 coordinates Zn(2+). N-formimidoyl-L-glutamate-binding residues include asparagine 304 and glycine 306. Serine 307 lines the 4-imidazolone-5-propanoate pocket.

The protein belongs to the metallo-dependent hydrolases superfamily. HutI family. The cofactor is Zn(2+). Fe(3+) is required as a cofactor.

It is found in the cytoplasm. The enzyme catalyses 4-imidazolone-5-propanoate + H2O = N-formimidoyl-L-glutamate. The protein operates within amino-acid degradation; L-histidine degradation into L-glutamate; N-formimidoyl-L-glutamate from L-histidine: step 3/3. Functionally, catalyzes the hydrolytic cleavage of the carbon-nitrogen bond in imidazolone-5-propanoate to yield N-formimidoyl-L-glutamate. It is the third step in the universal histidine degradation pathway. The chain is Imidazolonepropionase from Salinispora arenicola (strain CNS-205).